The primary structure comprises 300 residues: tRNA dimethylallyltransferase (300 aa).

Residue 18-25 participates in ATP binding; it reads GPTATGKS. 20 to 25 is a binding site for substrate; it reads TATGKS. The tract at residues 43–46 is interaction with substrate tRNA; that stretch reads DSRQ.

It belongs to the IPP transferase family. In terms of assembly, monomer. The cofactor is Mg(2+).

It carries out the reaction adenosine(37) in tRNA + dimethylallyl diphosphate = N(6)-dimethylallyladenosine(37) in tRNA + diphosphate. Functionally, catalyzes the transfer of a dimethylallyl group onto the adenine at position 37 in tRNAs that read codons beginning with uridine, leading to the formation of N6-(dimethylallyl)adenosine (i(6)A). This chain is tRNA dimethylallyltransferase, found in Cyanothece sp. (strain PCC 7425 / ATCC 29141).